The chain runs to 160 residues: Large ribosomal subunit protein uL10 (160 aa).

This sequence belongs to the universal ribosomal protein uL10 family. As to quaternary structure, part of the ribosomal stalk of the 50S ribosomal subunit. The N-terminus interacts with L11 and the large rRNA to form the base of the stalk. The C-terminus forms an elongated spine to which L12 dimers bind in a sequential fashion forming a multimeric L10(L12)X complex.

Functionally, forms part of the ribosomal stalk, playing a central role in the interaction of the ribosome with GTP-bound translation factors. This is Large ribosomal subunit protein uL10 from Wolinella succinogenes (strain ATCC 29543 / DSM 1740 / CCUG 13145 / JCM 31913 / LMG 7466 / NCTC 11488 / FDC 602W) (Vibrio succinogenes).